Reading from the N-terminus, the 294-residue chain is Glyceraldehyde-3-phosphate dehydrogenase (294 aa).

The NAD(+) site is built by D19, K63, and T105. Residues 134-136, T165, 194-195, and R217 each bind D-glyceraldehyde 3-phosphate; these read SCT and TG. The active-site Nucleophile is C135.

Belongs to the glyceraldehyde-3-phosphate dehydrogenase family. In terms of assembly, homotetramer.

It is found in the cytoplasm. The catalysed reaction is D-glyceraldehyde 3-phosphate + phosphate + NAD(+) = (2R)-3-phospho-glyceroyl phosphate + NADH + H(+). The protein operates within carbohydrate degradation; glycolysis; pyruvate from D-glyceraldehyde 3-phosphate: step 1/5. Functionally, catalyzes the oxidative phosphorylation of glyceraldehyde 3-phosphate (G3P) to 1,3-bisphosphoglycerate (BPG) using the cofactor NAD. The first reaction step involves the formation of a hemiacetal intermediate between G3P and a cysteine residue, and this hemiacetal intermediate is then oxidized to a thioester, with concomitant reduction of NAD to NADH. The reduced NADH is then exchanged with the second NAD, and the thioester is attacked by a nucleophilic inorganic phosphate to produce BPG. This Serratia odorifera protein is Glyceraldehyde-3-phosphate dehydrogenase (gap).